The sequence spans 621 residues: ATP-dependent lipid A-core flippase (621 aa).

5 helical membrane passes run 32-52 (IVAALIAIFGVAATESYLAAF), 91-111 (VWGTENKIWTVPLFLIILVVI), 192-212 (IVLLYLNWQLSLIVVLMFPLL), 286-306 (SPFSELIASIALAVVIFIALW), and 312-332 (YTTIGEFMAFIVAMLQMYAPI). The region spanning 33–344 (VAALIAIFGV…LANISIPMQT (312 aa)) is the ABC transmembrane type-1 domain. The ABC transporter domain occupies 378–611 (FRNVDVEYRS…NGYYTMLRNI (234 aa)). Residue 410 to 417 (GRSGSGKS) participates in ATP binding.

It belongs to the ABC transporter superfamily. Lipid exporter (TC 3.A.1.106) family. In terms of assembly, homodimer.

Its subcellular location is the cell inner membrane. It catalyses the reaction ATP + H2O + lipid A-core oligosaccharideSide 1 = ADP + phosphate + lipid A-core oligosaccharideSide 2.. In terms of biological role, involved in lipopolysaccharide (LPS) biosynthesis. Translocates lipid A-core from the inner to the outer leaflet of the inner membrane. Transmembrane domains (TMD) form a pore in the inner membrane and the ATP-binding domain (NBD) is responsible for energy generation. This Neisseria meningitidis serogroup B (strain ATCC BAA-335 / MC58) protein is ATP-dependent lipid A-core flippase.